The chain runs to 250 residues: NAD(P)H-quinone oxidoreductase subunit K (250 aa).

[4Fe-4S] cluster contacts are provided by Cys-60, Cys-61, Cys-125, and Cys-156. A disordered region spans residues 230-250; sequence ELNTSEIDASPASQPSSTYES. Residues 231-250 are compositionally biased toward polar residues; it reads LNTSEIDASPASQPSSTYES.

The protein belongs to the complex I 20 kDa subunit family. In terms of assembly, NDH-1 can be composed of about 15 different subunits; different subcomplexes with different compositions have been identified which probably have different functions. [4Fe-4S] cluster is required as a cofactor.

The protein localises to the cellular thylakoid membrane. The catalysed reaction is a plastoquinone + NADH + (n+1) H(+)(in) = a plastoquinol + NAD(+) + n H(+)(out). It carries out the reaction a plastoquinone + NADPH + (n+1) H(+)(in) = a plastoquinol + NADP(+) + n H(+)(out). In terms of biological role, NDH-1 shuttles electrons from an unknown electron donor, via FMN and iron-sulfur (Fe-S) centers, to quinones in the respiratory and/or the photosynthetic chain. The immediate electron acceptor for the enzyme in this species is believed to be plastoquinone. Couples the redox reaction to proton translocation, and thus conserves the redox energy in a proton gradient. Cyanobacterial NDH-1 also plays a role in inorganic carbon-concentration. This Prochlorococcus marinus (strain MIT 9303) protein is NAD(P)H-quinone oxidoreductase subunit K.